Reading from the N-terminus, the 315-residue chain is Calumenin (315 aa).

The signal sequence occupies residues Met-1–Ser-19. Position 47 is a phosphotyrosine (Tyr-47). The residue at position 65 (Thr-65) is a Phosphothreonine. EF-hand domains follow at residues Glu-68–Lys-103, Tyr-104–Asp-139, Pro-151–Asp-186, Met-188–Asn-223, Trp-229–Asp-264, and His-265–Ser-300. The residue at position 69 (Ser-69) is a Phosphoserine. Residues Asp-81, Asp-83, Asp-85, Glu-92, Asp-117, Asn-119, Asp-121, and Glu-128 each coordinate Ca(2+). An N-linked (GlcNAc...) asparagine glycan is attached at Asn-131. Ca(2+) contacts are provided by Asp-164, Asp-166, Asp-168, Glu-175, Asp-201, Asn-203, Asp-205, Glu-212, Asp-242, Asn-244, Asp-246, Lys-248, and Glu-253. Thr-254 carries the phosphothreonine modification. Residues Ser-261 and Ser-277 each carry the phosphoserine modification. Ca(2+)-binding residues include Asp-278, Asp-280, Asp-282, Lys-284, and Glu-289. Residues His-312 to Phe-315 carry the Prevents secretion from ER motif.

Belongs to the CREC family. In terms of assembly, binds crotoxin. Interacts with GGCX.

It is found in the endoplasmic reticulum membrane. Its subcellular location is the golgi apparatus. The protein localises to the secreted. The protein resides in the melanosome. It localises to the sarcoplasmic reticulum lumen. Functionally, involved in regulation of vitamin K-dependent carboxylation of multiple N-terminal glutamate residues. Seems to inhibit gamma-carboxylase GGCX. Binds 7 calcium ions with a low affinity. The sequence is that of Calumenin (Calu) from Rattus norvegicus (Rat).